Consider the following 311-residue polypeptide: tRNA pseudouridine synthase B (311 aa).

The active-site Nucleophile is the D39. The disordered stretch occupies residues 237–268 (RELSEQETTEISFGRRIAAGPGAGTPDAATAE). Low complexity predominate over residues 254–268 (AAGPGAGTPDAATAE).

The protein belongs to the pseudouridine synthase TruB family. Type 1 subfamily.

It catalyses the reaction uridine(55) in tRNA = pseudouridine(55) in tRNA. Its function is as follows. Responsible for synthesis of pseudouridine from uracil-55 in the psi GC loop of transfer RNAs. This is tRNA pseudouridine synthase B from Paenarthrobacter aurescens (strain TC1).